We begin with the raw amino-acid sequence, 527 residues long: GMP synthase [glutamine-hydrolyzing] (527 aa).

Residues 13 to 202 enclose the Glutamine amidotransferase type-1 domain; sequence TILVLDFGSQ…AVDICGAAQK (190 aa). Catalysis depends on cysteine 89, which acts as the Nucleophile. Active-site residues include histidine 176 and glutamate 178. Residues 203–402 enclose the GMPS ATP-PPase domain; the sequence is WSMENFVDTE…MGIPHDLVWR (200 aa). 231 to 237 serves as a coordination point for ATP; that stretch reads SGGVDST. Arginine 304, aspartate 464, lysine 519, and glutamate 525 together coordinate XMP.

In terms of assembly, homodimer. Mg(2+) is required as a cofactor.

Its subcellular location is the cytoplasm. The protein localises to the cytosol. The catalysed reaction is XMP + L-glutamine + ATP + H2O = GMP + L-glutamate + AMP + diphosphate + 2 H(+). The protein operates within purine metabolism; GMP biosynthesis; GMP from XMP (L-Gln route): step 1/1. Catalyzes the conversion of xanthine monophosphate (XMP) to GMP in the presence of glutamine and ATP through an adenyl-XMP intermediate. This chain is GMP synthase [glutamine-hydrolyzing] (GUA1), found in Yarrowia lipolytica (strain CLIB 122 / E 150) (Yeast).